A 787-amino-acid chain; its full sequence is Serine/threonine-protein kinase PLK4 (787 aa).

Residues 14–268 (YEVQHLLGKG…LEQVLRHPFM (255 aa)) enclose the Protein kinase domain. ATP-binding positions include 20 to 28 (LGKGGFASV) and Lys43. The active-site Proton acceptor is the Asp139. Residues 311 to 336 (SNESRSSQRLRSIEKSAQSSSNPQML) form a disordered region. A Cryptic POLO box 1 (CPB1) domain is found at 386–505 (EQQMRVPPLN…ARFVGLVKSK (120 aa)). The region spanning 506 to 613 (TPKITYFSSL…GRRPLTDVSH (108 aa)) is the Cryptic POLO box 2 (CPB2) domain. The POLO box domain maps to 675-755 (PIKRINIPDV…IPQVKLRLKC (81 aa)).

This sequence belongs to the protein kinase superfamily. Ser/Thr protein kinase family. CDC5/Polo subfamily. In terms of assembly, homodimer. Post-translationally, ubiquitinated by the SCF(Slimb) ubiquitin ligase complex; leading to its degradation by the proteasome during interphase and regulating centriole number and ensuring the block to centriole reduplication.

Its subcellular location is the cytoplasm. It localises to the cytoskeleton. It is found in the microtubule organizing center. The protein localises to the centrosome. The protein resides in the centriole. It catalyses the reaction L-seryl-[protein] + ATP = O-phospho-L-seryl-[protein] + ADP + H(+). The catalysed reaction is L-threonyl-[protein] + ATP = O-phospho-L-threonyl-[protein] + ADP + H(+). In terms of biological role, serine/threonine-protein kinase that plays a central role in centriole duplication. Able to trigger procentriole formation on the surface of the mother centriole cylinder, using mother centriole as a platform, leading to the recruitment of centriole biogenesis proteins such as sas-6. When overexpressed, it is able to induce centrosome amplification through the simultaneous generation of multiple procentrioles adjoining each parental centriole during S phase. Centrosome amplification following overexpression can initiate tumorigenesis, highlighting the importance of centrosome regulation in cancers. This is Serine/threonine-protein kinase PLK4 (SAK) from Drosophila willistoni (Fruit fly).